A 114-amino-acid polypeptide reads, in one-letter code: T cell receptor beta variable 6-1 (114 aa).

The N-terminal stretch at 1–21 is a signal peptide; sequence MSIGLLCCVAFSLLWASPVNA. An Ig-like domain is found at 22 to 114; sequence GVTQTPKFQV…TSVYFCASSE (93 aa). C42 and C110 form a disulfide bridge. Residue N84 is glycosylated (N-linked (GlcNAc...) asparagine).

Alpha-beta TR is a heterodimer composed of an alpha and beta chain; disulfide-linked. The alpha-beta TR is associated with the transmembrane signaling CD3 coreceptor proteins to form the TR-CD3 (TcR or TCR). The assembly of alpha-beta TR heterodimers with CD3 occurs in the endoplasmic reticulum where a single alpha-beta TR heterodimer associates with one CD3D-CD3E heterodimer, one CD3G-CD3E heterodimer and one CD247 homodimer forming a stable octameric structure. CD3D-CD3E and CD3G-CD3E heterodimers preferentially associate with TR alpha and TR beta chains, respectively. The association of the CD247 homodimer is the last step of TcR assembly in the endoplasmic reticulum and is required for transport to the cell surface.

It localises to the cell membrane. In terms of biological role, v region of the variable domain of T cell receptor (TR) beta chain that participates in the antigen recognition. Alpha-beta T cell receptors are antigen specific receptors which are essential to the immune response and are present on the cell surface of T lymphocytes. Recognize peptide-major histocompatibility (MH) (pMH) complexes that are displayed by antigen presenting cells (APC), a prerequisite for efficient T cell adaptive immunity against pathogens. Binding of alpha-beta TR to pMH complex initiates TR-CD3 clustering on the cell surface and intracellular activation of LCK that phosphorylates the ITAM motifs of CD3G, CD3D, CD3E and CD247 enabling the recruitment of ZAP70. In turn ZAP70 phosphorylates LAT, which recruits numerous signaling molecules to form the LAT signalosome. The LAT signalosome propagates signal branching to three major signaling pathways, the calcium, the mitogen-activated protein kinase (MAPK) kinase and the nuclear factor NF-kappa-B (NF-kB) pathways, leading to the mobilization of transcription factors that are critical for gene expression and essential for T cell growth and differentiation. The T cell repertoire is generated in the thymus, by V-(D)-J rearrangement. This repertoire is then shaped by intrathymic selection events to generate a peripheral T cell pool of self-MH restricted, non-autoaggressive T cells. Post-thymic interaction of alpha-beta TR with the pMH complexes shapes TR structural and functional avidity. The polypeptide is T cell receptor beta variable 6-1 (Homo sapiens (Human)).